The primary structure comprises 515 residues: 4-hydroxybenzoate brominase (decarboxylating) (515 aa).

Residues Ser13, Glu32, Val40, Phe41, His51, Val102, and Gln364 each coordinate FAD.

The protein belongs to the FMO family. FAD serves as cofactor.

It catalyses the reaction 2 bromide + 4-hydroxybenzoate + 2 NADPH + 2 O2 + 5 H(+) = 2,4-dibromophenol + CO2 + 2 NADP(+) + 4 H2O. The catalysed reaction is bromide + 4-hydroxybenzoate + NADPH + O2 + 2 H(+) = 3-bromo-4-hydroxybenzoate + NADP(+) + 2 H2O. It carries out the reaction 3-bromo-4-hydroxybenzoate + bromide + NADPH + O2 + 3 H(+) = 2,4-dibromophenol + CO2 + NADP(+) + 2 H2O. The enzyme catalyses 3,4-dihydroxybenzoate + 2 bromide + 2 NADPH + 2 O2 + 5 H(+) = 3,5-dibromobenzene-1,2-diol + CO2 + 2 NADP(+) + 4 H2O. It catalyses the reaction 3,4-dihydroxybenzoate + bromide + NADPH + O2 + 2 H(+) = 3-bromo-4,5-dihydroxybenzoate + NADP(+) + 2 H2O. The catalysed reaction is 3-bromo-4,5-dihydroxybenzoate + bromide + NADPH + O2 + 3 H(+) = 3,5-dibromobenzene-1,2-diol + CO2 + NADP(+) + 2 H2O. With respect to regulation, activity is abolished in the absence of either bromide or NADPH, while a partial reduction in activity is observed upon omission of FAD. Activity does not require the addition of a flavin reductase to regenerate FADH(2) in situ. Functionally, brominase involved in the biosynthesis of polybrominated aromatic organic compounds. Catalyzes the bromination of 4-hydroxybenzoate (4-HBA) to 3-bromo-4-hydroxybenzoate, followed by bromination and decarboxylation of 3-bromo-4-hydroxybenzoate to 2,4-dibromophenol. Can also use 3,4-dihydroxybenzoate, with lower efficiency, forming 3-bromo-4,5-dihydroxybenzoate and 3,5-dibromobenzene-1,2-diol. Can utilize iodide in vivo leading to the formation of iodophenols, but cannot use chloride. The sequence is that of 4-hydroxybenzoate brominase (decarboxylating) from Pseudoalteromonas luteoviolacea (strain 2ta16).